The following is a 305-amino-acid chain: Glycerol-3-phosphate dehydrogenase [NAD(P)+] (305 aa).

Residues Trp11, Arg31, and Lys79 each coordinate NADPH. The sn-glycerol 3-phosphate site is built by Lys79 and Gly107. NADPH is bound at residue Ala111. The sn-glycerol 3-phosphate site is built by Lys162, Asp215, Ser225, Arg226, and Asn227. Lys162 (proton acceptor) is an active-site residue. Arg226 contacts NADPH. Residue Glu252 coordinates NADPH.

It belongs to the NAD-dependent glycerol-3-phosphate dehydrogenase family.

Its subcellular location is the cytoplasm. It catalyses the reaction sn-glycerol 3-phosphate + NAD(+) = dihydroxyacetone phosphate + NADH + H(+). The catalysed reaction is sn-glycerol 3-phosphate + NADP(+) = dihydroxyacetone phosphate + NADPH + H(+). It functions in the pathway membrane lipid metabolism; glycerophospholipid metabolism. Functionally, catalyzes the reduction of the glycolytic intermediate dihydroxyacetone phosphate (DHAP) to sn-glycerol 3-phosphate (G3P), the key precursor for phospholipid synthesis. The polypeptide is Glycerol-3-phosphate dehydrogenase [NAD(P)+] (Gloeobacter violaceus (strain ATCC 29082 / PCC 7421)).